We begin with the raw amino-acid sequence, 487 residues long: Argininosuccinate lyase (487 aa).

It belongs to the lyase 1 family. Argininosuccinate lyase subfamily.

Its subcellular location is the cytoplasm. It catalyses the reaction 2-(N(omega)-L-arginino)succinate = fumarate + L-arginine. It participates in amino-acid biosynthesis; L-arginine biosynthesis; L-arginine from L-ornithine and carbamoyl phosphate: step 3/3. The polypeptide is Argininosuccinate lyase (Natranaerobius thermophilus (strain ATCC BAA-1301 / DSM 18059 / JW/NM-WN-LF)).